The chain runs to 94 residues: PqqA binding protein (94 aa).

The protein belongs to the PqqD family. In terms of assembly, monomer. Interacts with PqqE.

The protein operates within cofactor biosynthesis; pyrroloquinoline quinone biosynthesis. In terms of biological role, functions as a PqqA binding protein and presents PqqA to PqqE, in the pyrroloquinoline quinone (PQQ) biosynthetic pathway. The protein is PqqA binding protein of Acinetobacter baumannii (strain AB307-0294).